Reading from the N-terminus, the 343-residue chain is Dehydrodolichyl diphosphate synthase complex subunit SRT1 (343 aa).

The protein belongs to the UPP synthase family. In terms of assembly, forms an active dehydrodolichyl diphosphate synthase complex with NUS1. It depends on Mg(2+) as a cofactor.

It localises to the lipid droplet. The catalysed reaction is n isopentenyl diphosphate + (2E,6E)-farnesyl diphosphate = a di-trans,poly-cis-polyprenyl diphosphate + n diphosphate. It functions in the pathway protein modification; protein glycosylation. With NUS1, forms the dehydrodolichyl diphosphate synthase (DDS) complex, an essential component of the dolichol monophosphate (Dol-P) biosynthetic machinery. Adds multiple copies of isopentenyl pyrophosphate (IPP) to farnesyl pyrophosphate (FPP) to produce dehydrodolichyl diphosphate (Dedol-PP), a precursor of dolichol which is utilized as a sugar carrier in protein glycosylation in the endoplasmic reticulum (ER). This Saccharomyces cerevisiae (strain ATCC 204508 / S288c) (Baker's yeast) protein is Dehydrodolichyl diphosphate synthase complex subunit SRT1.